A 117-amino-acid polypeptide reads, in one-letter code: Huntingtin-interacting protein M (117 aa).

2 disordered regions span residues 1–30 and 71–117; these read MSEK…VPRS and EASN…RKND. Residues 72-81 show a composition bias toward polar residues; the sequence is ASNNGSMRNT. Residues 82–117 are compositionally biased toward basic and acidic residues; the sequence is SQDREREVDNNREPHSAESDVTRFLFDEMPKSRKND.

In terms of assembly, may interact with the N-terminus of HD.

The protein is Huntingtin-interacting protein M of Homo sapiens (Human).